A 254-amino-acid polypeptide reads, in one-letter code: 5-oxoprolinase subunit A (254 aa).

It belongs to the LamB/PxpA family. As to quaternary structure, forms a complex composed of PxpA, PxpB and PxpC.

It carries out the reaction 5-oxo-L-proline + ATP + 2 H2O = L-glutamate + ADP + phosphate + H(+). In terms of biological role, catalyzes the cleavage of 5-oxoproline to form L-glutamate coupled to the hydrolysis of ATP to ADP and inorganic phosphate. In Carboxydothermus hydrogenoformans (strain ATCC BAA-161 / DSM 6008 / Z-2901), this protein is 5-oxoprolinase subunit A.